Reading from the N-terminus, the 348-residue chain is Dihydroorotase (348 aa).

Zn(2+) contacts are provided by His-17 and His-19. Substrate-binding positions include 19–21 (HLR) and Asn-45. Zn(2+)-binding residues include Lys-103, His-140, and His-178. Lys-103 bears the N6-carboxylysine mark. His-140 serves as a coordination point for substrate. Leu-223 provides a ligand contact to substrate. Zn(2+) is bound at residue Asp-251. The active site involves Asp-251. His-255 and Ala-267 together coordinate substrate.

It belongs to the metallo-dependent hydrolases superfamily. DHOase family. Class II DHOase subfamily. In terms of assembly, homodimer. Requires Zn(2+) as cofactor.

The catalysed reaction is (S)-dihydroorotate + H2O = N-carbamoyl-L-aspartate + H(+). Its pathway is pyrimidine metabolism; UMP biosynthesis via de novo pathway; (S)-dihydroorotate from bicarbonate: step 3/3. Functionally, catalyzes the reversible cyclization of carbamoyl aspartate to dihydroorotate. The chain is Dihydroorotase from Salmonella typhi.